The following is a 719-amino-acid chain: DNA ligase (719 aa).

NAD(+) contacts are provided by residues 42 to 46 (DAAYD), 92 to 93 (SL), and E126. The active-site N6-AMP-lysine intermediate is K128. NAD(+) contacts are provided by R149, E185, K301, and K325. Residues C430, C433, C448, and C454 each contribute to the Zn(2+) site. One can recognise a BRCT domain in the interval 640-719 (ATGSPVEGKT…DDWFKLVGED (80 aa)).

This sequence belongs to the NAD-dependent DNA ligase family. LigA subfamily. Mg(2+) serves as cofactor. Mn(2+) is required as a cofactor.

The enzyme catalyses NAD(+) + (deoxyribonucleotide)n-3'-hydroxyl + 5'-phospho-(deoxyribonucleotide)m = (deoxyribonucleotide)n+m + AMP + beta-nicotinamide D-nucleotide.. Its function is as follows. DNA ligase that catalyzes the formation of phosphodiester linkages between 5'-phosphoryl and 3'-hydroxyl groups in double-stranded DNA using NAD as a coenzyme and as the energy source for the reaction. It is essential for DNA replication and repair of damaged DNA. This chain is DNA ligase, found in Brucella melitensis biotype 2 (strain ATCC 23457).